The primary structure comprises 265 residues: 3-methyl-2-oxobutanoate hydroxymethyltransferase (265 aa).

Aspartate 45 and aspartate 84 together coordinate Mg(2+). Residues 45 to 46 (DS), aspartate 84, and lysine 114 contribute to the 3-methyl-2-oxobutanoate site. A Mg(2+)-binding site is contributed by glutamate 116. The active-site Proton acceptor is the glutamate 183.

The protein belongs to the PanB family. As to quaternary structure, homodecamer; pentamer of dimers. Mg(2+) serves as cofactor.

It is found in the cytoplasm. It catalyses the reaction 3-methyl-2-oxobutanoate + (6R)-5,10-methylene-5,6,7,8-tetrahydrofolate + H2O = 2-dehydropantoate + (6S)-5,6,7,8-tetrahydrofolate. It participates in cofactor biosynthesis; (R)-pantothenate biosynthesis; (R)-pantoate from 3-methyl-2-oxobutanoate: step 1/2. In terms of biological role, catalyzes the reversible reaction in which hydroxymethyl group from 5,10-methylenetetrahydrofolate is transferred onto alpha-ketoisovalerate to form ketopantoate. This Salinibacter ruber (strain DSM 13855 / M31) protein is 3-methyl-2-oxobutanoate hydroxymethyltransferase.